A 447-amino-acid chain; its full sequence is Methylenetetrahydrofolate--tRNA-(uracil-5-)-methyltransferase TrmFO (447 aa).

FAD is bound at residue 13–18; sequence GAGLAG.

This sequence belongs to the MnmG family. TrmFO subfamily. FAD is required as a cofactor.

It is found in the cytoplasm. The enzyme catalyses uridine(54) in tRNA + (6R)-5,10-methylene-5,6,7,8-tetrahydrofolate + NADH + H(+) = 5-methyluridine(54) in tRNA + (6S)-5,6,7,8-tetrahydrofolate + NAD(+). It catalyses the reaction uridine(54) in tRNA + (6R)-5,10-methylene-5,6,7,8-tetrahydrofolate + NADPH + H(+) = 5-methyluridine(54) in tRNA + (6S)-5,6,7,8-tetrahydrofolate + NADP(+). Its function is as follows. Catalyzes the folate-dependent formation of 5-methyl-uridine at position 54 (M-5-U54) in all tRNAs. The polypeptide is Methylenetetrahydrofolate--tRNA-(uracil-5-)-methyltransferase TrmFO (Streptococcus thermophilus (strain ATCC BAA-250 / LMG 18311)).